Reading from the N-terminus, the 371-residue chain is S-adenosylmethionine:tRNA ribosyltransferase-isomerase (371 aa).

The protein belongs to the QueA family. As to quaternary structure, monomer.

The protein resides in the cytoplasm. It catalyses the reaction 7-aminomethyl-7-carbaguanosine(34) in tRNA + S-adenosyl-L-methionine = epoxyqueuosine(34) in tRNA + adenine + L-methionine + 2 H(+). It functions in the pathway tRNA modification; tRNA-queuosine biosynthesis. Its function is as follows. Transfers and isomerizes the ribose moiety from AdoMet to the 7-aminomethyl group of 7-deazaguanine (preQ1-tRNA) to give epoxyqueuosine (oQ-tRNA). The protein is S-adenosylmethionine:tRNA ribosyltransferase-isomerase of Prochlorococcus marinus (strain MIT 9303).